A 251-amino-acid polypeptide reads, in one-letter code: uncharacterized protein (251 aa).

The N-terminal stretch at 1–18 (MKILIILSIILCSLFGRA) is a signal peptide.

It belongs to the MlaA family.

This is an uncharacterized protein from Rickettsia prowazekii (strain Madrid E).